The sequence spans 384 residues: 8-amino-7-oxononanoate synthase (384 aa).

Residue Arg-21 coordinates substrate. 108–109 (GF) is a pyridoxal 5'-phosphate binding site. His-133 lines the substrate pocket. Pyridoxal 5'-phosphate is bound by residues Ser-179, His-207, and Thr-233. At Lys-236 the chain carries N6-(pyridoxal phosphate)lysine. Substrate is bound at residue Thr-352.

It belongs to the class-II pyridoxal-phosphate-dependent aminotransferase family. BioF subfamily. Homodimer. Pyridoxal 5'-phosphate serves as cofactor.

The enzyme catalyses 6-carboxyhexanoyl-[ACP] + L-alanine + H(+) = (8S)-8-amino-7-oxononanoate + holo-[ACP] + CO2. It participates in cofactor biosynthesis; biotin biosynthesis. Catalyzes the decarboxylative condensation of pimeloyl-[acyl-carrier protein] and L-alanine to produce 8-amino-7-oxononanoate (AON), [acyl-carrier protein], and carbon dioxide. In Escherichia coli (strain K12 / DH10B), this protein is 8-amino-7-oxononanoate synthase.